The chain runs to 673 residues: Putative K(+)-stimulated pyrophosphate-energized sodium pump (673 aa).

5 helical membrane-spanning segments follow: residues 3–23, 62–82, 84–104, 127–147, and 154–174; these read SFIV…FMLS, IVIV…ACFI, GAIF…KANV, VMGM…YYIF, and VTGF…GGGI. A substrate-binding site is contributed by Lys177. Residues Asp180, Asp184, Asn207, and Asp210 each coordinate Mg(2+). 6 helical membrane passes run 222–242, 247–267, 279–299, 302–322, 364–384, and 387–407; these read LFES…VVYA, VMFP…GILF, ALNT…AILS, IFGN…GMII, LWPI…MGGG, and AMVG…TTGL. Asp419 serves as a coordination point for Mg(2+). A run of 4 helical transmembrane segments spans residues 449 to 469, 486 to 506, 553 to 573, and 576 to 596; these read AAIG…SLFA, VTLV…ALTM, EMIL…LLLG, and ALGG…ILMS. Ca(2+) is bound by residues Asp603, Asp629, and Asp633. Lys636 serves as a coordination point for substrate. The chain crosses the membrane as a helical span at residues 652–672; that stretch reads IVSLVFAPVVLQYGGILLNLI.

Belongs to the H(+)-translocating pyrophosphatase (TC 3.A.10) family. K(+)-stimulated subfamily. As to quaternary structure, homodimer. Requires Mg(2+) as cofactor.

Its subcellular location is the cell membrane. The enzyme catalyses Na(+)(in) + diphosphate + H2O = Na(+)(out) + 2 phosphate + H(+). With respect to regulation, requires K(+) for maximal activity. Functionally, sodium pump that utilizes the energy of pyrophosphate hydrolysis as the driving force for Na(+) movement across the membrane. This chain is Putative K(+)-stimulated pyrophosphate-energized sodium pump, found in Clostridium tetani (strain Massachusetts / E88).